Reading from the N-terminus, the 874-residue chain is Alanine--tRNA ligase (874 aa).

Zn(2+) contacts are provided by H562, H566, C665, and H669.

Belongs to the class-II aminoacyl-tRNA synthetase family. It depends on Zn(2+) as a cofactor.

It localises to the cytoplasm. The enzyme catalyses tRNA(Ala) + L-alanine + ATP = L-alanyl-tRNA(Ala) + AMP + diphosphate. Functionally, catalyzes the attachment of alanine to tRNA(Ala) in a two-step reaction: alanine is first activated by ATP to form Ala-AMP and then transferred to the acceptor end of tRNA(Ala). Also edits incorrectly charged Ser-tRNA(Ala) and Gly-tRNA(Ala) via its editing domain. This chain is Alanine--tRNA ligase, found in Pseudomonas aeruginosa (strain ATCC 15692 / DSM 22644 / CIP 104116 / JCM 14847 / LMG 12228 / 1C / PRS 101 / PAO1).